A 190-amino-acid chain; its full sequence is ATP synthase subunit delta (190 aa).

Belongs to the ATPase delta chain family. In terms of assembly, F-type ATPases have 2 components, F(1) - the catalytic core - and F(0) - the membrane proton channel. F(1) has five subunits: alpha(3), beta(3), gamma(1), delta(1), epsilon(1). F(0) has three main subunits: a(1), b(2) and c(10-14). The alpha and beta chains form an alternating ring which encloses part of the gamma chain. F(1) is attached to F(0) by a central stalk formed by the gamma and epsilon chains, while a peripheral stalk is formed by the delta and b chains.

It is found in the cell inner membrane. F(1)F(0) ATP synthase produces ATP from ADP in the presence of a proton or sodium gradient. F-type ATPases consist of two structural domains, F(1) containing the extramembraneous catalytic core and F(0) containing the membrane proton channel, linked together by a central stalk and a peripheral stalk. During catalysis, ATP synthesis in the catalytic domain of F(1) is coupled via a rotary mechanism of the central stalk subunits to proton translocation. In terms of biological role, this protein is part of the stalk that links CF(0) to CF(1). It either transmits conformational changes from CF(0) to CF(1) or is implicated in proton conduction. The polypeptide is ATP synthase subunit delta (Methylobacterium sp. (strain 4-46)).